The chain runs to 60 residues: Large ribosomal subunit protein bL32 (60 aa).

The disordered stretch occupies residues 1 to 23 (MAVPKRKKSKSRRNMHRSHHAIK).

Belongs to the bacterial ribosomal protein bL32 family.

The polypeptide is Large ribosomal subunit protein bL32 (Wolbachia sp. subsp. Brugia malayi (strain TRS)).